A 580-amino-acid chain; its full sequence is Putative Xaa-Pro dipeptidyl-peptidase (580 aa).

Catalysis depends on charge relay system residues Ser-207, Asp-319, and His-350.

Belongs to the peptidase S15 family.

The enzyme catalyses Hydrolyzes Xaa-Pro-|- bonds to release unblocked, N-terminal dipeptides from substrates including Ala-Pro-|-p-nitroanilide and (sequentially) Tyr-Pro-|-Phe-Pro-|-Gly-Pro-|-Ile.. In Bacillus cereus (strain ATCC 14579 / DSM 31 / CCUG 7414 / JCM 2152 / NBRC 15305 / NCIMB 9373 / NCTC 2599 / NRRL B-3711), this protein is Putative Xaa-Pro dipeptidyl-peptidase.